Here is a 1386-residue protein sequence, read N- to C-terminus: Putative ATP-dependent RNA helicase DHX57 (1386 aa).

Basic residues predominate over residues 1–11; the sequence is MSSSVRRKGKP. Disordered regions lie at residues 1 to 106 and 120 to 147; these read MSSS…MTSE and EQDA…NDER. 2 stretches are compositionally biased toward gly residues: residues 12–23 and 35–50; these read GKGGGKGSSRGG and GSGG…GGGN. Residues 101-125 are a coiled coil; it reads LHMTSENQEKVKALLRDLQEQDADA. 2 positions are modified to phosphoserine: serine 127 and serine 132. Over residues 133-143 the composition is skewed to acidic residues; sequence GEEEDDEPDCC. Positions 180–220 constitute a UBA domain; the sequence is TVSPFAVQKLSRYGFNTERCQAVLRMCDGDVGASLEHLLTQ. The C3H1-type zinc finger occupies 299 to 326; that stretch reads ENSLEICKFYLKGNCKFGSKCRFKHEVP. Serine 475, serine 477, and serine 480 each carry phosphoserine. Residues 554 to 721 enclose the Helicase ATP-binding domain; the sequence is LNLLRKHQVV…FNSCPVITIP (168 aa). ATP is bound at residue 567-574; it reads GMTGCGKT. A DEVH box motif is present at residues 668 to 671; sequence DEVH. A Helicase C-terminal domain is found at 830-1010; it reads LIEALLEWIV…QLCLRIKILE (181 aa).

Belongs to the DEAD box helicase family. DEAH subfamily.

It catalyses the reaction ATP + H2O = ADP + phosphate + H(+). Functionally, probable ATP-binding RNA helicase. The chain is Putative ATP-dependent RNA helicase DHX57 (DHX57) from Homo sapiens (Human).